The primary structure comprises 1074 residues: BRD4-interacting chromatin-remodeling complex-associated protein-like (1074 aa).

Disordered regions lie at residues 542-603 (AVSS…NTPG), 620-689 (TSPI…GQKR), 834-874 (TPLD…HDQF), and 887-952 (GNIS…SKLP). Composition is skewed to polar residues over residues 544–576 (SSAS…QANR), 591–603 (ASKS…NTPG), 620–629 (TSPIPTSKTT), and 660–680 (GATQ…TAVQ). Residue Ser621 is modified to Phosphoserine. Composition is skewed to basic and acidic residues over residues 889–904 (ISKK…KFDR), 913–925 (PPED…DPAK), and 934–948 (EGHR…HGSE). A Phosphoserine modification is found at Ser976.

Component of the multiprotein chromatin-remodeling complexes SWI/SNF: SWI/SNF-A (BAF), SWI/SNF-B (PBAF) and related complexes. The canonical complex contains a catalytic subunit (either SMARCA4/BRG1/BAF190A or SMARCA2/BRM/BAF190B) and at least SMARCE1, ACTL6A/BAF53, SMARCC1/BAF155, SMARCC2/BAF170, and SMARCB1/SNF5/BAF47. Other subunits specific to each of the complexes may also be present permitting several possible combinations developmentally and tissue specific. Component of the SWI/SNF (GBAF) subcomplex, which includes at least BICRA or BICRAL (mutually exclusive), BRD9, SS18, the core BAF subunits, SMARCA2/BRM, SMARCA4/BRG1/BAF190A, ACTL6A/BAF53, SMARCC1/BAF155, and SMARCD1/BAF60A.

Component of SWI/SNF chromatin remodeling subcomplex GBAF that carries out key enzymatic activities, changing chromatin structure by altering DNA-histone contacts within a nucleosome in an ATP-dependent manner. This is BRD4-interacting chromatin-remodeling complex-associated protein-like from Mus musculus (Mouse).